The sequence spans 494 residues: Cytochrome P450 monooxygenase acrF (494 aa).

Residue Cys420 participates in heme binding.

It belongs to the cytochrome P450 family. The cofactor is heme.

It functions in the pathway secondary metabolite biosynthesis. Its function is as follows. Cytochrome P450 monooxygenase; part of the cluster that mediates the biosynthesis of acurin A, a highly reduced polyketide coupled to a serine via a peptide bond. The activities of the highly reducing polyketide synthase acrA and the nonribosomal peptide synthetase acrB are collectively responsible for the synthesis of the acurin A core structure with a heptaketide backbone produced by acrA covalently fused to a L-serine by acrB. After the formation of the PK-NRP hybrid product, it is detached from acrB by reductive release to set up the formation of the lactam ring by aldol condensation. The hydrolyase acrC then catalyzes water loss to generate a double bond in the ring. This double bond is probably reduced, which is followed by three oxidations at C-22 to generate the carboxylic acid moiety, involving probably the FAD-binding monooxygenase acrE and the cytochrome P450 monooxygenases acrD and acrF. Finally, a last methylation step performed by the O-methyltransferase acrG leads to the production of acurin A. The chain is Cytochrome P450 monooxygenase acrF from Aspergillus aculeatus (strain ATCC 16872 / CBS 172.66 / WB 5094).